Reading from the N-terminus, the 236-residue chain is uncharacterized protein (236 aa).

Over residues 1-17 (MSVSSLLQPNTYNINSK) the composition is skewed to polar residues. The tract at residues 1–94 (MSVSSLLQPN…GVKGTTGGTI (94 aa)) is disordered. The segment covering 18–35 (SQSLSNTPSNPTSQTNTL) has biased composition (low complexity). The Collagen-like domain occupies 58 to 91 (GPSGPKGDKGDPGSKGETGSQGIKGDPGVKGTTG).

It belongs to the sputnik virus V6 family.

This is an uncharacterized protein from Sputnik virophage.